A 167-amino-acid polypeptide reads, in one-letter code: NAD(P)H-quinone oxidoreductase subunit I, chloroplastic (167 aa).

2 consecutive 4Fe-4S ferredoxin-type domains span residues 55-84 and 95-124; these read GRIHFEFDKCIACEVCVRVCPIDLPVVDWK and LNYSIDFGICIFCGNCVEYCPTNCLSMTEE. 8 residues coordinate [4Fe-4S] cluster: Cys-64, Cys-67, Cys-70, Cys-74, Cys-104, Cys-107, Cys-110, and Cys-114.

The protein belongs to the complex I 23 kDa subunit family. As to quaternary structure, NDH is composed of at least 16 different subunits, 5 of which are encoded in the nucleus. It depends on [4Fe-4S] cluster as a cofactor.

Its subcellular location is the plastid. It is found in the chloroplast thylakoid membrane. The enzyme catalyses a plastoquinone + NADH + (n+1) H(+)(in) = a plastoquinol + NAD(+) + n H(+)(out). It catalyses the reaction a plastoquinone + NADPH + (n+1) H(+)(in) = a plastoquinol + NADP(+) + n H(+)(out). Its function is as follows. NDH shuttles electrons from NAD(P)H:plastoquinone, via FMN and iron-sulfur (Fe-S) centers, to quinones in the photosynthetic chain and possibly in a chloroplast respiratory chain. The immediate electron acceptor for the enzyme in this species is believed to be plastoquinone. Couples the redox reaction to proton translocation, and thus conserves the redox energy in a proton gradient. The protein is NAD(P)H-quinone oxidoreductase subunit I, chloroplastic of Vitis vinifera (Grape).